We begin with the raw amino-acid sequence, 371 residues long: Protein MxiG (371 aa).

The helical transmembrane segment at V127–F141 threads the bilayer.

The protein resides in the cell inner membrane. It localises to the cell outer membrane. Involved in the secretion of the Ipa antigens. Involved in the intracellular dissemination of Shigella. Part of the Mxi-Spa secretion apparatus. This chain is Protein MxiG (mxiG), found in Shigella flexneri.